Reading from the N-terminus, the 373-residue chain is tRNA-specific 2-thiouridylase MnmA (373 aa).

ATP is bound by residues 7–14 (AMSGGVDS) and L33. C101 serves as the catalytic Nucleophile. A disulfide bridge connects residues C101 and C215. G125 provides a ligand contact to ATP. Residues 165–167 (KDQ) form an interaction with tRNA region. C215 (cysteine persulfide intermediate) is an active-site residue.

It belongs to the MnmA/TRMU family.

The protein localises to the cytoplasm. It carries out the reaction S-sulfanyl-L-cysteinyl-[protein] + uridine(34) in tRNA + AH2 + ATP = 2-thiouridine(34) in tRNA + L-cysteinyl-[protein] + A + AMP + diphosphate + H(+). Its function is as follows. Catalyzes the 2-thiolation of uridine at the wobble position (U34) of tRNA, leading to the formation of s(2)U34. The polypeptide is tRNA-specific 2-thiouridylase MnmA (Roseiflexus sp. (strain RS-1)).